We begin with the raw amino-acid sequence, 451 residues long: Trimethylamine monooxygenase (451 aa).

FAD contacts are provided by S12, E37, Q39, L45, W46, and H62. Residues W70 and N72 each contribute to the NADP(+) site. FAD-binding residues include N72 and V125. The NADP(+) site is built by S204, S205, S207, and R228. The FAD site is built by Q317 and T320. Position 411 (R411) interacts with NADP(+).

It belongs to the FMO family. Requires FAD as cofactor.

The catalysed reaction is trimethylamine + NADPH + O2 = trimethylamine N-oxide + NADP(+) + H2O. Its function is as follows. Catalyzes the oxidation of trimethylamine (TMA) to produce trimethylamine N-oxide (TMAO). In vitro, has a broad substrate specificity, oxidizing many nitrogen- and sulfur-containing compounds, including dimethylamine (DMA), dimethylsulfide (DMS), dimethylsulfoxide (DMSO), cysteamine, methimazole and dimethylaniline. In Methylocella silvestris (strain DSM 15510 / CIP 108128 / LMG 27833 / NCIMB 13906 / BL2), this protein is Trimethylamine monooxygenase.